Consider the following 285-residue polypeptide: tRNA U34 carboxymethyltransferase (285 aa).

Carboxy-S-adenosyl-L-methionine contacts are provided by residues Lys-56, Trp-70, Lys-75, Gly-94, 143 to 144 (VE), Tyr-163, and Arg-278.

The protein belongs to the class I-like SAM-binding methyltransferase superfamily. CmoB family. As to quaternary structure, homotetramer.

It carries out the reaction carboxy-S-adenosyl-L-methionine + 5-hydroxyuridine(34) in tRNA = 5-carboxymethoxyuridine(34) in tRNA + S-adenosyl-L-homocysteine + H(+). Functionally, catalyzes carboxymethyl transfer from carboxy-S-adenosyl-L-methionine (Cx-SAM) to 5-hydroxyuridine (ho5U) to form 5-carboxymethoxyuridine (cmo5U) at position 34 in tRNAs. The polypeptide is tRNA U34 carboxymethyltransferase (Campylobacter hominis (strain ATCC BAA-381 / DSM 21671 / CCUG 45161 / LMG 19568 / NCTC 13146 / CH001A)).